Consider the following 404-residue polypeptide: MPTDTNSIIALSKSIGKLAREFENGATPSKEVQQALVLASEQLGVAAREPDDNVYNISGQISQNAAIRSAIALNAFALMPEDGSTITVEDISTKMNADPELVGRILRACASAHVFGHPTVNEYCHNNLSRVYLQGDHRQLAAQIYDFTGHAVLAIPDFGEEKQWKSMGDYVRGPFQLGFATDLSYMEYLQANPQRLKSWNSGMRTGKIGHRTSAFPFDRALELDPCGKDGIAIVDVGGGRGQALEGIHQDYPNLEGRLVLQDLPDVIKDAKANGLPDYIETTPGTFFDPLTAKGARIYHFRRVFHIWTQTKALELLENTKNAMNDYSRMLIADMVLADVGCERDLAMQDLNMMSLGGMERSESEWTSLIESAGLVLKKIWQNDQGPKHAVVEATLPTFKGHGLE.

Residues 237-238 (GG), aspartate 262, arginine 301, and arginine 302 contribute to the S-adenosyl-L-methionine site. The active-site Proton acceptor is the histidine 305.

This sequence belongs to the class I-like SAM-binding methyltransferase superfamily. Cation-independent O-methyltransferase family.

The protein operates within secondary metabolite biosynthesis. Its function is as follows. O-methyltransferase; part of the gene cluster that mediates the biosynthesis of dibenzodioxocinones such as pestalotiollide B, a novel class of inhibitors against cholesterol ester transfer protein (CEPT). The biosynthesis initiates from condensation of acetate and malonate units catalyzed by the non-reducing PKS pks8/GME11356. Pks8/GME11356 lacks a thioesterase (TE) domain, which is important to the cyclizing of the third ring of atrochrysone carboxylic acid, and the esterase GME11355 might play the role of TE and catalyzes the cyclization reaction of the C ring. The lactamase-like protein GME11357 (or other beta-lactamases in Pestalotiopsis microspora) probably hydrolyzes the thioester bond between the ACP of pks8/GME11356 and the intermediate to release atrochrysone carboxylic acid, which is spontaneously dehydrates to form endocrocin anthrone. Endocrocin anthrone is further converted to emodin via the endocrocin intermediate. Emodin is then oxidized by several enzymes such as the Baeyer-Villiger oxidase GME11358, the oxidoreductase GME11367, the short chain dehydrogenase/reductase GME11373, as well as by other oxidoreductases from the cluster, to modify the A and C rings and open the B ring, and finally yield monodictyphenone. The prenyltransferase GME11375 may catalyze the addition reaction between the C5 side chains and the carbon bone of dibenzodioxocinones. The remaining biochemical reactions to the final product dibenzodioxocinones should be methylation catalyzed by methyltransferase GME11366 and reduction and lactonization reaction catalyzed by a series of oxidordeuctases. This is O-methyltransferase GME11366 from Pestalotiopsis microspora.